The following is a 409-amino-acid chain: Microfibrillar-associated protein 3-like (409 aa).

The first 28 residues, 1 to 28 (MDRLKSHLTVCFLPSVPFLILVSTLATA), serve as a signal peptide directing secretion. Over 29–149 (KSVTNSTLNG…LRVIFTSGDM (121 aa)) the chain is Extracellular. N-linked (GlcNAc...) asparagine glycans are attached at residues Asn33, Asn37, Asn67, Asn111, and Asn135. The 95-residue stretch at 47–141 (PVIIARTDHI…GTVNNTVTLR (95 aa)) folds into the Ig-like C2-type domain. Cys68 and Cys125 are oxidised to a cystine. Residues 150-172 (GVYYMVVCLVAFTIVMVLNITRL) traverse the membrane as a helical segment. Over 173-409 (CMMSSHLKKT…NTCIIYESHV (237 aa)) the chain is Cytoplasmic. Tyr287 is modified (phosphotyrosine; by EGFR). Disordered regions lie at residues 292–311 (SLKR…LHEQ) and 320–385 (SVHP…VLPP). 4 positions are modified to phosphoserine: Ser298, Ser303, Ser306, and Ser307. Residues 339-355 (EVKDVEETELSAEHSPE) are compositionally biased toward basic and acidic residues. Over residues 363–377 (VTSTELTSEEPTPVE) the composition is skewed to low complexity.

As to expression, highly expressed in testis.

It localises to the cell membrane. Its subcellular location is the nucleus. The protein resides in the cytoplasm. May participate in the nuclear signaling of EGFR and MAPK1/ERK2. May a have a role in metastasis. This is Microfibrillar-associated protein 3-like (MFAP3L) from Homo sapiens (Human).